The sequence spans 409 residues: Regulator of Ty1 transposition protein 103 (409 aa).

Positions 1–135 constitute a CID domain; that stretch reads MPFSSEQFTT…DIERSLKTES (135 aa). The disordered stretch occupies residues 250–409; the sequence is LNKNVDEDNI…IQDLLSKLAN (160 aa). Residues 266–289 show a composition bias toward acidic residues; the sequence is GDGDDDDDDGDNDDDDDDDDDDKN. 3 stretches are compositionally biased toward basic and acidic residues: residues 307–323, 337–363, and 370–380; these read TDKK…EHKN, RTHD…KTSE, and EDGHYELDIEG.

It belongs to the UPF0400 (RTT103) family. Interacts with PCF11, RAI1, RAT1, RPO21 and RBP2.

Its subcellular location is the nucleus. In terms of biological role, involved in transcription termination by RNA polymerase II and in regulation of Ty1 transposition. This chain is Regulator of Ty1 transposition protein 103 (RTT103), found in Saccharomyces cerevisiae (strain ATCC 204508 / S288c) (Baker's yeast).